We begin with the raw amino-acid sequence, 1136 residues long: Nitric oxide synthase, inducible (1136 aa).

2 residues coordinate Zn(2+): cysteine 107 and cysteine 112. Heme b is bound at residue cysteine 197. Positions 260, 369, 370, and 374 each coordinate L-arginine. Positions 378, 459, 460, and 473 each coordinate (6R)-L-erythro-5,6,7,8-tetrahydrobiopterin. Residue tyrosine 488 participates in heme b binding. Residues 512 to 532 (LSILAKAVLLASLLLQKTMAA) form a calmodulin-binding region. A Flavodoxin-like domain is found at 536-674 (VTVIYATETG…AFRTWAVTAF (139 aa)). 11 residues coordinate FMN: threonine 542, glutamate 543, threonine 544, lysine 546, serine 547, serine 588, threonine 589, serine 625, cysteine 632, glutamate 658, and glutamine 662. The region spanning 727–967 (KNVIPMKLKF…VRSADGFRLP (241 aa)) is the FAD-binding FR-type domain. NADP(+) is bound at residue arginine 747. Residues histidine 769, arginine 903, tyrosine 905, serine 906, threonine 921, alanine 923, tyrosine 927, valine 940, cysteine 941, and serine 942 each coordinate FAD. Residues threonine 981, arginine 1014, serine 1043, arginine 1044, lysine 1050, tyrosine 1052, glutamine 1054, and aspartate 1087 each contribute to the NADP(+) site.

The protein belongs to the NOS family. As to quaternary structure, homodimer. Requires heme b as cofactor. It depends on FAD as a cofactor. The cofactor is FMN. (6R)-L-erythro-5,6,7,8-tetrahydrobiopterin serves as cofactor.

It is found in the cytoplasm. The protein localises to the cytosol. It carries out the reaction 2 L-arginine + 3 NADPH + 4 O2 + H(+) = 2 L-citrulline + 2 nitric oxide + 3 NADP(+) + 4 H2O. With respect to regulation, not stimulated by calcium/calmodulin. Functionally, produces nitric oxide (NO) which is a messenger molecule with diverse functions throughout the body. NO may serve as both a paracrine and autocrine signal for modulating osteoclast bone resorption. Also has nitrosylase activity and mediates cysteine S-nitrosylation of cytoplasmic target proteins such COX2. This is Nitric oxide synthase, inducible (NOS2) from Gallus gallus (Chicken).